We begin with the raw amino-acid sequence, 398 residues long: NADH-quinone oxidoreductase subunit D (398 aa).

The protein belongs to the complex I 49 kDa subunit family. In terms of assembly, NDH-1 is composed of 14 different subunits. Subunits NuoB, C, D, E, F, and G constitute the peripheral sector of the complex.

Its subcellular location is the cell inner membrane. It carries out the reaction a quinone + NADH + 5 H(+)(in) = a quinol + NAD(+) + 4 H(+)(out). In terms of biological role, NDH-1 shuttles electrons from NADH, via FMN and iron-sulfur (Fe-S) centers, to quinones in the respiratory chain. The immediate electron acceptor for the enzyme in this species is believed to be ubiquinone. Couples the redox reaction to proton translocation (for every two electrons transferred, four hydrogen ions are translocated across the cytoplasmic membrane), and thus conserves the redox energy in a proton gradient. The sequence is that of NADH-quinone oxidoreductase subunit D from Rhodospirillum centenum (strain ATCC 51521 / SW).